We begin with the raw amino-acid sequence, 192 residues long: Glycerol-3-phosphate acyltransferase (192 aa).

5 helical membrane passes run 3–23, 51–71, 80–100, 112–132, and 149–169; these read ALFLVIFAYLLGSITFGEVIA, YGVLVFFLDFLKGFIPALIAV, VLTFTGLASVLGHMYPVFFGF, VVFAVSPSVALFSFLVWLGIF, and AFLFLFVAGYPVNVLFMAIVI.

This sequence belongs to the PlsY family. Probably interacts with PlsX.

It localises to the cell inner membrane. It catalyses the reaction an acyl phosphate + sn-glycerol 3-phosphate = a 1-acyl-sn-glycero-3-phosphate + phosphate. Its pathway is lipid metabolism; phospholipid metabolism. Its function is as follows. Catalyzes the transfer of an acyl group from acyl-phosphate (acyl-PO(4)) to glycerol-3-phosphate (G3P) to form lysophosphatidic acid (LPA). This enzyme utilizes acyl-phosphate as fatty acyl donor, but not acyl-CoA or acyl-ACP. This Aquifex aeolicus (strain VF5) protein is Glycerol-3-phosphate acyltransferase.